The chain runs to 513 residues: TRAF3-interacting JNK-activating modulator (513 aa).

3 disordered regions span residues 1–96 (MISS…GQVS), 130–171 (SSGI…KAEE), and 381–402 (SLQG…QLKK). Over 1-485 (MISSDSRSSP…QLQVKENELQ (485 aa)) the chain is Cytoplasmic. 2 stretches are compositionally biased toward basic and acidic residues: residues 17 to 31 (ESYE…ETRE) and 69 to 79 (RNLEEEKKGQA). Residues 266 to 488 (MKKVLLEMED…VKENELQCGQ (223 aa)) are a coiled coil. A compositionally biased stretch (polar residues) spans 386-397 (GEQQSSETQDLQ). A helical; Anchor for type IV membrane protein transmembrane segment spans residues 486–506 (CGQWLPVLMVVIATALAVFLA). The Extracellular portion of the chain corresponds to 507-513 (NKGNLVI).

As to quaternary structure, interacts (via its coiled-coil domain) with TRAF3 (via isoleucine zipper). Interacts with MAP2K1. Interacts with PPP2CA; this interaction targets PPP2CA to the lysosomes. Interacts with MAVS. Interacts with TBK1. In terms of tissue distribution, expressed in bone marrow, spleen and thymus. Not detected in heart, kidney and liver.

It is found in the cell membrane. Its subcellular location is the golgi apparatus membrane. It localises to the lysosome membrane. The protein localises to the mitochondrion outer membrane. Its function is as follows. Adapter protein that plays essential roles in both innate and adaptive immunity. Plays a crucial role in the regulation of thymocyte development. Mechanistically, mediates TCR-stimulated activation through recruiting MAP2K1/MEK1 to the Golgi and, thereby, facilitating the interaction of MAP2K1/MEK1 with its activator BRAF. Also plays an essential role in regulatory T-cell stability and function by recruiting the serine-threonine phosphatase catalytic subunit (PPP2CA) to the lysosome, thereby facilitating the interaction of PP2Ac with the mTORC1 component RPTOR and restricting glycolytic metabolism. Positively regulates TLR4 signaling activity in macrophage-mediated inflammation by acting as a molecular clamp to facilitate LPS-induced translocation of TLR4 to lipid rafts. In response to viral infection, facilitates the recruitment of TRAF3 to MAVS within mitochondria leading to IRF3 activation and interferon production. However, participates in the maintenance of immune homeostasis and the prevention of overzealous innate immunity by promoting 'Lys-48'-dependent ubiquitination of TBK1. The chain is TRAF3-interacting JNK-activating modulator (Traf3ip3) from Mus musculus (Mouse).